We begin with the raw amino-acid sequence, 209 residues long: MPLNEMVSVVTNLVERGYIRKKSVVSALLSVPRHKFVPKYLESSAYQDNPLEIGYGQTISAIHMVGIMCEELDLDKGQNVLEIGTGSGYHAAVVLEIIGKSGKLTTIERVFELFNSAKENLLKFGYNNIEVIYGDGTKGHIENAPYDRIYLTAAGKKVPEILFEQLNDGGILLAPVGTYNQYLIKYMKINGQIYEEILLEVSFVPLIEE.

S60 is a catalytic residue.

Belongs to the methyltransferase superfamily. L-isoaspartyl/D-aspartyl protein methyltransferase family.

The protein localises to the cytoplasm. The catalysed reaction is [protein]-L-isoaspartate + S-adenosyl-L-methionine = [protein]-L-isoaspartate alpha-methyl ester + S-adenosyl-L-homocysteine. In terms of biological role, catalyzes the methyl esterification of L-isoaspartyl residues in peptides and proteins that result from spontaneous decomposition of normal L-aspartyl and L-asparaginyl residues. It plays a role in the repair and/or degradation of damaged proteins. This chain is Protein-L-isoaspartate O-methyltransferase, found in Methanococcus vannielii (strain ATCC 35089 / DSM 1224 / JCM 13029 / OCM 148 / SB).